Here is a 487-residue protein sequence, read N- to C-terminus: WD-40 repeat-containing protein MSI5 (487 aa).

The residue at position 1 (Met-1) is an N-acetylmethionine. Low complexity predominate over residues 1 to 12; that stretch reads MESEAAATVQAT. Positions 1–44 are disordered; the sequence is MESEAAATVQATRPRRAPRTPVTAILTDKRRRKPKSNNESQLPF. A Nuclear localization signal motif is present at residues 14–21; it reads PRRAPRTP. WD repeat units follow at residues 142–182, 197–237, 270–310, 315–355, 364–404, and 419–466; these read IHPG…DRYA, GHQD…TMAG, GHKD…SPAM, AHDA…SNGV, GHRA…KKSE, and GHRD…YRPE. Residues 236 to 268 are disordered; that stretch reads AGSDSKSPGSSFKQTGEGSDKTGGPSVGPRGIY. The segment covering 237 to 252 has biased composition (polar residues); that stretch reads GSDSKSPGSSFKQTGE. A DWD box motif is present at residues 288–303; it reads FCSVGDDSCLMLWDAR.

This sequence belongs to the WD repeat RBAP46/RBAP48/MSI1 family. As to quaternary structure, interacts with AHL16. Interacts with LHP1, PDP2, PDP3 and PDP6. Component of the PRC2 (polycomb repressive complex 2) complex which regulates histone methylation on histone H3K27.

The protein resides in the nucleus. Core histone-binding subunit that may target chromatin assembly factors, chromatin remodeling factors and histone deacetylases to their histone substrates in a manner that is regulated by nucleosomal DNA. Acts together with PDP1 and MSI4/FVE to regulate the function of the PRC2 complex on FLC. This is WD-40 repeat-containing protein MSI5 from Arabidopsis thaliana (Mouse-ear cress).